The chain runs to 91 residues: Alpha-defensin-related sequence 12 (91 aa).

Positions 1–19 are cleaved as a signal peptide; the sequence is MKKLVLLSAFVLLAFQVQA. The propeptide occupies 20–65; sequence DSIQNTDEEIKTEEQPGEENQAVSISFGDPEGYALQDAAIRRARRC. A run of 6 repeats spans residues 65 to 67, 68 to 70, 71 to 73, 74 to 76, 77 to 79, and 83 to 85. The tract at residues 65–88 is 6 X 3 AA tandem repeats of C-P-X; sequence CPPCPSCLSCPWCPRCLRCPMCKC.

The protein belongs to the alpha-defensin family. As to expression, paneth cells of the small bowel.

Its subcellular location is the secreted. In terms of biological role, apparent precursor of a secreted, cationic, proline- and cysteine-rich peptide that contains Cys-Pro-Xaa repeats. Unlike cryptdin, the proposed mature peptide region lacks the structural motif characteristic of defensins. It may have microbicidal activities. The protein is Alpha-defensin-related sequence 12 (Defa-rs12) of Mus musculus (Mouse).